We begin with the raw amino-acid sequence, 183 residues long: Probable chemoreceptor glutamine deamidase CheD (183 aa).

Belongs to the CheD family.

The catalysed reaction is L-glutaminyl-[protein] + H2O = L-glutamyl-[protein] + NH4(+). Probably deamidates glutamine residues to glutamate on methyl-accepting chemotaxis receptors (MCPs), playing an important role in chemotaxis. This is Probable chemoreceptor glutamine deamidase CheD from Rhizobium meliloti (strain 1021) (Ensifer meliloti).